Reading from the N-terminus, the 309-residue chain is Prephenate dehydratase (309 aa).

The Prephenate dehydratase domain maps to 3 to 191 (GIAYLGPEGT…ARTRFVLVGC (189 aa)). In terms of domain architecture, ACT spans 205 to 282 (SVVLRLDNVP…ADVRYLGSWP (78 aa)).

In terms of assembly, homodimer.

It carries out the reaction prephenate + H(+) = 3-phenylpyruvate + CO2 + H2O. Its pathway is amino-acid biosynthesis; L-phenylalanine biosynthesis; phenylpyruvate from prephenate: step 1/1. The polypeptide is Prephenate dehydratase (pheA) (Mycolicibacterium gilvum (strain PYR-GCK) (Mycobacterium gilvum (strain PYR-GCK))).